A 659-amino-acid chain; its full sequence is UvrABC system protein B (659 aa).

The Helicase ATP-binding domain occupies 25 to 414; that stretch reads EGVRRGAREQ…PSLVVEQIVR (390 aa). 38–45 serves as a coordination point for ATP; the sequence is GATGTGKT. A Beta-hairpin motif is present at residues 91 to 114; that stretch reads YYDYYQPEAYIPTTDTYIEKDALI. Residues 431-597 enclose the Helicase C-terminal domain; that stretch reads QIDDLYAEIR…TIVKPVRDVI (167 aa). Positions 620–655 constitute a UVR domain; sequence PKVVAKLRKEMMQAAKDLDFERAAEIRDIIFELEKK.

It belongs to the UvrB family. Forms a heterotetramer with UvrA during the search for lesions. Interacts with UvrC in an incision complex.

It is found in the cytoplasm. In terms of biological role, the UvrABC repair system catalyzes the recognition and processing of DNA lesions. A damage recognition complex composed of 2 UvrA and 2 UvrB subunits scans DNA for abnormalities. Upon binding of the UvrA(2)B(2) complex to a putative damaged site, the DNA wraps around one UvrB monomer. DNA wrap is dependent on ATP binding by UvrB and probably causes local melting of the DNA helix, facilitating insertion of UvrB beta-hairpin between the DNA strands. Then UvrB probes one DNA strand for the presence of a lesion. If a lesion is found the UvrA subunits dissociate and the UvrB-DNA preincision complex is formed. This complex is subsequently bound by UvrC and the second UvrB is released. If no lesion is found, the DNA wraps around the other UvrB subunit that will check the other stand for damage. The polypeptide is UvrABC system protein B (Symbiobacterium thermophilum (strain DSM 24528 / JCM 14929 / IAM 14863 / T)).